Consider the following 529-residue polypeptide: Phospholipase A1-Igamma2, chloroplastic (529 aa).

The N-terminal 43 residues, 1–43 (MAAIPSHNNLLTINHKNSITGSSSLNTNFSEINFPAKFRVATR), are a transit peptide targeting the chloroplast. Residues 316-320 (GHSLG) carry the GXSXG motif. Ser-318 functions as the Acyl-ester intermediate in the catalytic mechanism. Residues Asp-381 and His-437 each act as charge relay system in the active site.

This sequence belongs to the AB hydrolase superfamily. Lipase family. In terms of assembly, interacts with SBP1. In terms of tissue distribution, widely expressed. Highly expressed in leaves and stems.

It is found in the plastid. Its subcellular location is the chloroplast. It carries out the reaction 1,2-dihexadecanoyl-sn-glycero-3-phosphocholine + H2O = 2-hexadecanoyl-sn-glycero-3-phosphocholine + hexadecanoate + H(+). The catalysed reaction is a 1,2-diacyl-3-O-(beta-D-galactosyl)-sn-glycerol + H2O = an acyl-3-O-(beta-D-galactosyl)-sn-glycerol + a fatty acid + H(+). The enzyme catalyses a 1,2-diacyl-3-O-[alpha-D-galactosyl-(1-&gt;6)-beta-D-galactosyl]-sn-glycerol + H2O = acyl-3-O-[alpha-D-galactosyl-(1-&gt;6)-beta-D-galactosyl]-sn-glycerol + a fatty acid + H(+). It catalyses the reaction a triacylglycerol + H2O = a diacylglycerol + a fatty acid + H(+). Acylhydrolase with broad specificity. Catalyzes the hydrolysis of phosphatidylcholine at the sn-1 position. Possesses moderate activity toward phosphatidylcholine (PC), monogalactosyldiacylglycerol (MGDG), digalactosyldiacylglycerol (DGDG) and triacylglycerol (TAG). The chain is Phospholipase A1-Igamma2, chloroplastic from Arabidopsis thaliana (Mouse-ear cress).